Consider the following 432-residue polypeptide: Alpha-ketoglutarate permease (432 aa).

The Cytoplasmic portion of the chain corresponds to 1–32 (MAESTVTADSKLTSSDTRRRIWAIVGASSGNL). The helical transmembrane segment at 33-53 (VEWFDFYVYSFCSLYFAHIFF) threads the bilayer. The Periplasmic portion of the chain corresponds to 54 to 62 (PSGNTTTQL). A helical membrane pass occupies residues 63–83 (LQTAGVFAAGFLMRPIGGWLF). Over 84 to 95 (GRIADKHGRKKS) the chain is Cytoplasmic. The helical transmembrane segment at 96–116 (MLLSVCMMCFGSLVIACLPGY) threads the bilayer. Topologically, residues 117 to 118 (ET) are periplasmic. Residues 119–139 (IGTWAPALLLLARLFQGLSVG) traverse the membrane as a helical segment. Topologically, residues 140-162 (GEYGTSATYMSEVAVEGRKGFYA) are cytoplasmic. A helical transmembrane segment spans residues 163–183 (SFQYVTLIGGQLLALLVVVVL). At 184–193 (QHTMEDAALR) the chain is on the periplasmic side. The helical transmembrane segment at 194–214 (EWGWRIPFALGAVLAVVALWL) threads the bilayer. Residues 215–243 (RRQLDETSQQETRALKEAGSLKGLWRNRR) lie on the Cytoplasmic side of the membrane. Residues 244–264 (AFIMVLGFTAAGSLCFYTFTT) form a helical membrane-spanning segment. Residues 265 to 279 (YMQKYLVNTAGMHAN) lie on the Periplasmic side of the membrane. A helical transmembrane segment spans residues 280–300 (VASGIMTAALFVFMLIQPLIG). Residues 301 to 309 (ALSDKIGRR) are Cytoplasmic-facing. Residues 310–330 (TSMLCFGSLAAIFTVPILSAL) traverse the membrane as a helical segment. Over 331 to 339 (QNVSSPYAA) the chain is Periplasmic. A helical transmembrane segment spans residues 340–360 (FGLVMCALLIVSFYTSISGIL). The Cytoplasmic portion of the chain corresponds to 361-373 (KAEMFPAQVRALG). Residues 374-394 (VGLSYAVANAIFGGSAEYVAL) form a helical membrane-spanning segment. The Periplasmic segment spans residues 395 to 402 (SLKSIGME). The chain crosses the membrane as a helical span at residues 403–423 (TAFFWYVTLMAVVAFLVSLML). Residues 424–432 (HRKGKGMRL) are Cytoplasmic-facing.

It belongs to the major facilitator superfamily. Metabolite:H+ Symporter (MHS) family (TC 2.A.1.6) family.

The protein localises to the cell inner membrane. Its function is as follows. Uptake of alpha-ketoglutarate across the boundary membrane with the concomitant import of a cation (symport system). This chain is Alpha-ketoglutarate permease (kgtP), found in Escherichia coli (strain K12).